A 163-amino-acid polypeptide reads, in one-letter code: Lipoprotein signal peptidase (163 aa).

4 consecutive transmembrane segments (helical) span residues 9 to 29 (YLAI…SALS), 39 to 59 (VLPF…SFLA), 67 to 87 (WFFT…LYKS), and 92 to 112 (LLCI…LDRV). Residues Asp-119 and Asp-137 contribute to the active site. Residues 130-150 (WPAFNIADSAICVGAALIIWG) form a helical membrane-spanning segment.

It belongs to the peptidase A8 family.

Its subcellular location is the cell inner membrane. The catalysed reaction is Release of signal peptides from bacterial membrane prolipoproteins. Hydrolyzes -Xaa-Yaa-Zaa-|-(S,diacylglyceryl)Cys-, in which Xaa is hydrophobic (preferably Leu), and Yaa (Ala or Ser) and Zaa (Gly or Ala) have small, neutral side chains.. Its pathway is protein modification; lipoprotein biosynthesis (signal peptide cleavage). This protein specifically catalyzes the removal of signal peptides from prolipoproteins. This Polynucleobacter necessarius subsp. necessarius (strain STIR1) protein is Lipoprotein signal peptidase.